Reading from the N-terminus, the 379-residue chain is Armadillo repeat-containing X-linked protein 3 (379 aa).

The Mitochondrial intermembrane segment spans residues 1–6; it reads MGYARK. Mitochondrion outer membrane (MOM)-targeting sequence regions lie at residues 1–6 and 26–37; these read MGYARK and RLTRGRKQNKEK. The helical; Signal-anchor transmembrane segment at 7–29 threads the bilayer; the sequence is VGWVTAGLVIGAGACYCIYRLTR. At 30–379 the chain is on the cytoplasmic side; sequence GRKQNKEKMA…TERMFPKSQE (350 aa). The segment at 34-69 is disordered; the sequence is NKEKMAEGGPGDVEDAGDCSGARYNDWSDDDDDSNE. A phosphoserine mark is found at S61, S67, and S72. The nuclear localization signal stretch occupies residues 89-98; it reads RARARARARA. Residue S110 is modified to Phosphoserine. 3 ARM repeats span residues 111–151, 153–192, and 233–272; these read PNSD…NNAA, AFNR…NLSV, and VTNE…NLAE.

Belongs to the eutherian X-chromosome-specific Armcx family. As to quaternary structure, interacts (via ARM domain) with MIRO1, MIRO2 and TRAK2. The interaction with Miro is calcium-dependent. Interacts with Sox10.

Its subcellular location is the mitochondrion outer membrane. The protein resides in the cytoplasm. It localises to the nucleus. In terms of biological role, regulates mitochondrial aggregation and transport in axons in living neurons. May link mitochondria to the Trak2-kinesin motor complex via its interaction with Miro and Trak2. Mitochondrial distribution and dynamics is regulated through Armcx3 protein degradation, which is promoted by PCK and negatively regulated by Wnt1. Enhances the Sox10-mediated transactivation of the neuronal acetylcholine receptor subunit alpha-3 and beta-4 subunit gene promoters. This is Armadillo repeat-containing X-linked protein 3 (Armcx3) from Rattus norvegicus (Rat).